Reading from the N-terminus, the 1235-residue chain is ATP-dependent DNA helicase mph1 (1235 aa).

Disordered stretches follow at residues 20–78 (LTQA…YRIH) and 96–148 (DEMP…VHSP). The span at 61-72 (SRSDNDEADEKK) shows a compositional bias: basic and acidic residues. Residues 137–148 (AKTQKQNIVHSP) show a composition bias toward polar residues. In terms of domain architecture, Helicase ATP-binding spans 272–440 (IVHKGLFNNL…EVIDNLEIAE (169 aa)). Position 285-292 (285-292 (LPTGLGKT)) interacts with ATP. Positions 388-391 (DEAH) match the DEAH box motif. The region spanning 608-784 (KLTYLCDTVL…GSRFTFRHDL (177 aa)) is the Helicase C-terminal domain. Disordered regions lie at residues 808–827 (NTQDPSLPEPKRRAKPRKKL), 944–1117 (SRLQ…PPLM), and 1144–1235 (TGAK…DSDE). Residues 947 to 958 (QRPEDRDNKPYG) are compositionally biased toward basic and acidic residues. Residues 1015-1027 (VAPKKAKPRRGRA) show a composition bias toward basic residues. Positions 1065-1074 (PGERVDRTSD) are enriched in basic and acidic residues. Residues 1075-1085 (MEELEADDDSD) show a composition bias toward acidic residues. Polar residues-rich tracts occupy residues 1095-1114 (PTQTQTQIPLTGTSNFSSSP) and 1146-1159 (AKNSSFKNGTMTQE). Positions 1160-1170 (SSDGGDSMDSD) are enriched in low complexity. The segment covering 1194–1209 (PSSSVFSSGQKATPNM) has biased composition (polar residues).

Belongs to the DEAD box helicase family. DEAH subfamily. FANCM sub-subfamily. As to quaternary structure, interacts with the MHF histone-fold complex to form the FANCM-MHF complex.

Its subcellular location is the nucleus. It catalyses the reaction ATP + H2O = ADP + phosphate + H(+). In terms of biological role, ATP-dependent DNA helicase involved in DNA damage repair by homologous recombination and in genome maintenance. Capable of unwinding D-loops. Plays a role in limiting crossover recombinants during mitotic DNA double-strand break (DSB) repair. Component of a FANCM-MHF complex which promotes gene conversion at blocked replication forks, probably by reversal of the stalled fork. The polypeptide is ATP-dependent DNA helicase mph1 (Sclerotinia sclerotiorum (strain ATCC 18683 / 1980 / Ss-1) (White mold)).